Consider the following 228-residue polypeptide: Cytidylate kinase (228 aa).

12–20 (GPSGSGKGT) provides a ligand contact to ATP.

Belongs to the cytidylate kinase family. Type 1 subfamily.

It is found in the cytoplasm. The catalysed reaction is CMP + ATP = CDP + ADP. The enzyme catalyses dCMP + ATP = dCDP + ADP. The chain is Cytidylate kinase from Pseudomonas entomophila (strain L48).